A 559-amino-acid polypeptide reads, in one-letter code: Oxygen-dependent choline dehydrogenase (559 aa).

4-33 lines the FAD pocket; the sequence is DYIIIGAGSAGNVLATRLTEESDVSVLLLE. A disordered region spans residues 182–201; it reads EGFGPMDRTVTPKGRRASTA. His471 (proton acceptor) is an active-site residue.

This sequence belongs to the GMC oxidoreductase family. FAD serves as cofactor.

The catalysed reaction is choline + A = betaine aldehyde + AH2. It catalyses the reaction betaine aldehyde + NAD(+) + H2O = glycine betaine + NADH + 2 H(+). It functions in the pathway amine and polyamine biosynthesis; betaine biosynthesis via choline pathway; betaine aldehyde from choline (cytochrome c reductase route): step 1/1. Its function is as follows. Involved in the biosynthesis of the osmoprotectant glycine betaine. Catalyzes the oxidation of choline to betaine aldehyde and betaine aldehyde to glycine betaine at the same rate. This chain is Oxygen-dependent choline dehydrogenase, found in Pectobacterium carotovorum subsp. carotovorum (strain PC1).